Here is a 197-residue protein sequence, read N- to C-terminus: ATP-dependent Clp protease proteolytic subunit (197 aa).

The active-site Nucleophile is S98. H123 is a catalytic residue.

Belongs to the peptidase S14 family. Fourteen ClpP subunits assemble into 2 heptameric rings which stack back to back to give a disk-like structure with a central cavity, resembling the structure of eukaryotic proteasomes.

It localises to the cytoplasm. The catalysed reaction is Hydrolysis of proteins to small peptides in the presence of ATP and magnesium. alpha-casein is the usual test substrate. In the absence of ATP, only oligopeptides shorter than five residues are hydrolyzed (such as succinyl-Leu-Tyr-|-NHMec, and Leu-Tyr-Leu-|-Tyr-Trp, in which cleavage of the -Tyr-|-Leu- and -Tyr-|-Trp bonds also occurs).. In terms of biological role, cleaves peptides in various proteins in a process that requires ATP hydrolysis. Has a chymotrypsin-like activity. Plays a major role in the degradation of misfolded proteins. The sequence is that of ATP-dependent Clp protease proteolytic subunit from Natranaerobius thermophilus (strain ATCC BAA-1301 / DSM 18059 / JW/NM-WN-LF).